A 205-amino-acid chain; its full sequence is Isochorismatase domain-containing protein 2 (205 aa).

The protein belongs to the isochorismatase family.

The polypeptide is Isochorismatase domain-containing protein 2 (isoc2) (Xenopus laevis (African clawed frog)).